Reading from the N-terminus, the 213-residue chain is Thymidylate kinase (213 aa).

11 to 18 (GPEGAGKT) contributes to the ATP binding site.

This sequence belongs to the thymidylate kinase family.

The catalysed reaction is dTMP + ATP = dTDP + ADP. In terms of biological role, phosphorylation of dTMP to form dTDP in both de novo and salvage pathways of dTTP synthesis. This is Thymidylate kinase from Leuconostoc mesenteroides subsp. mesenteroides (strain ATCC 8293 / DSM 20343 / BCRC 11652 / CCM 1803 / JCM 6124 / NCDO 523 / NBRC 100496 / NCIMB 8023 / NCTC 12954 / NRRL B-1118 / 37Y).